An 842-amino-acid polypeptide reads, in one-letter code: Glycogen phosphorylase, muscle form (842 aa).

N-acetylserine is present on Ser2. Ser15 is modified (phosphoserine; by PHK; in form phosphorylase A). Residues Asp43 and Tyr76 each contribute to the AMP site. Phosphotyrosine is present on residues Tyr204 and Tyr227. An AMP-binding site is contributed by 310–319 (RRFKSSKFGC). Ser430 is modified (phosphoserine). Tyr473 carries the phosphotyrosine modification. At Lys681 the chain carries N6-(pyridoxal phosphate)lysine. Phosphoserine is present on residues Ser747 and Ser748.

It belongs to the glycogen phosphorylase family. As to quaternary structure, homodimer. Homotetramer; to form the enzymatically active phosphorylase A. Pyridoxal 5'-phosphate serves as cofactor. In terms of processing, phosphorylation of Ser-15 converts phosphorylase B (unphosphorylated) to phosphorylase A.

It catalyses the reaction [(1-&gt;4)-alpha-D-glucosyl](n) + phosphate = [(1-&gt;4)-alpha-D-glucosyl](n-1) + alpha-D-glucose 1-phosphate. With respect to regulation, allosterically regulated through the non-covalent binding of metabolites, being activated by AMP and inhibited by ATP, ADP, and glucose-6-phosphate. The activity is also controlled by post-translational modifications including phosphorylation. In terms of biological role, allosteric enzyme that catalyzes the rate-limiting step in glycogen catabolism, the phosphorolytic cleavage of glycogen to produce glucose-1-phosphate, and plays a central role in maintaining cellular and organismal glucose homeostasis. This Ovis aries (Sheep) protein is Glycogen phosphorylase, muscle form.